Here is a 574-residue protein sequence, read N- to C-terminus: Ankyrin repeat protein B18 (574 aa).

ANK repeat units lie at residues 56 to 87 (TGYT…NVTM), 135 to 164 (IKSR…DPNF), 167 to 213 (DGYT…NLNA), 217 to 249 (CGNT…NFKI), 253 to 285 (HGLT…NVGE), and 327 to 356 (EGKT…DINA). One can recognise an F-box domain in the interval 541–574 (NCLLTLLPSEIIYEILYMLTINDLYNISYPPTKV).

This Homo sapiens (Human) protein is Ankyrin repeat protein B18.